The sequence spans 595 residues: Indole-3-acetic acid-amido synthetase GH3.15 (595 aa).

Residues 97–98 (SS), threonine 302, and 325–330 (FYGSSE) each bind ATP. Substrate-binding residues include phenylalanine 325 and phenylalanine 332. Tyrosine 348 and aspartate 408 together coordinate ATP.

This sequence belongs to the IAA-amido conjugating enzyme family. In terms of tissue distribution, expressed in seedlings, roots, and parts of the siliques.

The catalysed reaction is (indol-3-yl)butanoate + L-cysteine + ATP = (indol-3-yl)butanoyl-L-cysteine + AMP + diphosphate + H(+). It carries out the reaction (indol-3-yl)butanoate + L-glutamine + ATP = (indol-3-yl)butanoyl-L-glutamine + AMP + diphosphate + H(+). It catalyses the reaction 4-(2,4-dichlorophenoxy)butanoate + L-glutamine + ATP = 4-(2,4-dichlorophenoxy)butanoyl-L-glutamine + AMP + diphosphate + H(+). Functionally, indole-3-acetic acid-amido (IAA) synthetase that catalyzes the conjugation of amino acids to auxin specifically using the auxin precursor indole-3-butyric acid (IBA) and glutamine and, possibly, cysteine as substrates. Displays high catalytic activity with the auxinic phenoxyalkanoic acid herbicides 4-(2,4-dichlorophenoxy)butyric acid (2,4-DB) and to some extent 2,4-dichlorophenoxylacetic acid (2,4-D) as substrates, thus conferring resistance to herbicides. In Arabidopsis thaliana (Mouse-ear cress), this protein is Indole-3-acetic acid-amido synthetase GH3.15.